Consider the following 290-residue polypeptide: tRNA (guanine-N(7)-)-methyltransferase (290 aa).

Basic and acidic residues-rich tracts occupy residues 1-12 and 20-43; these read MSDSLHTPEEPR and AHAHDGSLRHTRAKGEPRFPDGPK. Positions 1-49 are disordered; the sequence is MSDSLHTPEEPRPGPGEQLAHAHDGSLRHTRAKGEPRFPDGPKADPAGS. Residues glutamate 104, aspartate 129, aspartate 156, and aspartate 179 each contribute to the S-adenosyl-L-methionine site. Aspartate 179 is a catalytic residue. Residues lysine 183, aspartate 215, and 252–255 each bind substrate; that span reads TRFE.

It belongs to the class I-like SAM-binding methyltransferase superfamily. TrmB family.

The catalysed reaction is guanosine(46) in tRNA + S-adenosyl-L-methionine = N(7)-methylguanosine(46) in tRNA + S-adenosyl-L-homocysteine. The protein operates within tRNA modification; N(7)-methylguanine-tRNA biosynthesis. Functionally, catalyzes the formation of N(7)-methylguanine at position 46 (m7G46) in tRNA. In Streptomyces avermitilis (strain ATCC 31267 / DSM 46492 / JCM 5070 / NBRC 14893 / NCIMB 12804 / NRRL 8165 / MA-4680), this protein is tRNA (guanine-N(7)-)-methyltransferase.